We begin with the raw amino-acid sequence, 103 residues long: Small ribosomal subunit protein uS10 (103 aa).

This sequence belongs to the universal ribosomal protein uS10 family. Part of the 30S ribosomal subunit.

Functionally, involved in the binding of tRNA to the ribosomes. This is Small ribosomal subunit protein uS10 from Neorickettsia sennetsu (strain ATCC VR-367 / Miyayama) (Ehrlichia sennetsu).